The sequence spans 59 residues: Small integral membrane protein 30 (59 aa).

An N-terminal signal peptide occupies residues 1–24 (MNSVSTQLILVLASLLLILPVVEA). Over 25-29 (VEAGD) the chain is Extracellular. The helical transmembrane segment at 30-50 (AIALLLGVVLSITGICACLGI) threads the bilayer. The Cytoplasmic segment spans residues 51 to 59 (YARKRNGQM).

In terms of assembly, interacts (via transmembrane domain) with antiviral protein MAVS (via transmembrane domain); the interaction disrupts MAVS interaction with RIGI and inhibits MAVS aggregation, resulting in the repression of type I interferon signaling and innate immune responses.

It localises to the endoplasmic reticulum membrane. It is found in the mitochondrion membrane. In terms of biological role, negatively regulates antiviral innate immune responses. Disrupts the interaction of antiviral protein MAVS with innate immune receptor RIGI and inhibits MAVS aggregation, resulting in the repression of type I interferon signaling and innate immune responses. The chain is Small integral membrane protein 30 from Mus musculus (Mouse).